Here is a 288-residue protein sequence, read N- to C-terminus: NAD kinase (288 aa).

The active-site Proton acceptor is D68. NAD(+) is bound by residues 68–69 (DG), 142–143 (ND), R153, D172, and Q242.

It belongs to the NAD kinase family. It depends on a divalent metal cation as a cofactor.

The protein resides in the cytoplasm. It carries out the reaction NAD(+) + ATP = ADP + NADP(+) + H(+). Functionally, involved in the regulation of the intracellular balance of NAD and NADP, and is a key enzyme in the biosynthesis of NADP. Catalyzes specifically the phosphorylation on 2'-hydroxyl of the adenosine moiety of NAD to yield NADP. This chain is NAD kinase, found in Desulforamulus reducens (strain ATCC BAA-1160 / DSM 100696 / MI-1) (Desulfotomaculum reducens).